We begin with the raw amino-acid sequence, 222 residues long: Probable transaldolase (222 aa).

The active-site Schiff-base intermediate with substrate is lysine 91.

The protein belongs to the transaldolase family. Type 3B subfamily.

The protein localises to the cytoplasm. It carries out the reaction D-sedoheptulose 7-phosphate + D-glyceraldehyde 3-phosphate = D-erythrose 4-phosphate + beta-D-fructose 6-phosphate. The protein operates within carbohydrate degradation; pentose phosphate pathway; D-glyceraldehyde 3-phosphate and beta-D-fructose 6-phosphate from D-ribose 5-phosphate and D-xylulose 5-phosphate (non-oxidative stage): step 2/3. Functionally, transaldolase is important for the balance of metabolites in the pentose-phosphate pathway. This chain is Probable transaldolase, found in Chlorobaculum parvum (strain DSM 263 / NCIMB 8327) (Chlorobium vibrioforme subsp. thiosulfatophilum).